The chain runs to 490 residues: Cyclin-A2-1 (490 aa).

The disordered stretch occupies residues 34–76 (FAPSVSLPARTERKQTAKGKTKRGALDEITSASTATSAPQPKR). Residues 63–72 (TSASTATSAP) are compositionally biased toward polar residues.

The protein belongs to the cyclin family. Cyclin AB subfamily.

This is Cyclin-A2-1 (CYCA2-1) from Oryza sativa subsp. japonica (Rice).